The chain runs to 144 residues: Large ribosomal subunit protein uL15 (144 aa).

Positions 1 to 52 (MRLNTLSPAAGSKPSKKRVGRGIGSGLGKTGGRGHKGQKSRSGGKVRAGFEG) are disordered. The segment covering 21-31 (RGIGSGLGKTG) has biased composition (gly residues). Basic residues predominate over residues 32–44 (GRGHKGQKSRSGG).

The protein belongs to the universal ribosomal protein uL15 family. Part of the 50S ribosomal subunit.

In terms of biological role, binds to the 23S rRNA. This chain is Large ribosomal subunit protein uL15, found in Aliivibrio fischeri (strain ATCC 700601 / ES114) (Vibrio fischeri).